Consider the following 727-residue polypeptide: Non-structural protein 4 (727 aa).

Disordered regions lie at residues 1-38 (MNQSRSFVTGRGRDLSRTPSALSSNSETPGSMSSPSEG) and 673-727 (SMTL…KLSK). Residues 17–38 (RTPSALSSNSETPGSMSSPSEG) show a composition bias toward polar residues. The segment covering 712–727 (SRRKARKARAASKLSK) has biased composition (basic residues).

The sequence is that of Non-structural protein 4 from Rice dwarf virus (isolate Akita) (RDV).